Here is a 904-residue protein sequence, read N- to C-terminus: Leucine--tRNA ligase (904 aa).

Positions 49-59 (PYPSGDLHIGH) match the 'HIGH' region motif. Positions 663–667 (TMSKS) match the 'KMSKS' region motif. Lys-666 contacts ATP.

The protein belongs to the class-I aminoacyl-tRNA synthetase family.

The protein localises to the cytoplasm. It carries out the reaction tRNA(Leu) + L-leucine + ATP = L-leucyl-tRNA(Leu) + AMP + diphosphate. This is Leucine--tRNA ligase from Roseiflexus castenholzii (strain DSM 13941 / HLO8).